The sequence spans 478 residues: Probable glycine dehydrogenase (decarboxylating) subunit 2 (478 aa).

K264 is modified (N6-(pyridoxal phosphate)lysine).

This sequence belongs to the GcvP family. C-terminal subunit subfamily. As to quaternary structure, the glycine cleavage system is composed of four proteins: P, T, L and H. In this organism, the P 'protein' is a heterodimer of two subunits. Requires pyridoxal 5'-phosphate as cofactor.

It catalyses the reaction N(6)-[(R)-lipoyl]-L-lysyl-[glycine-cleavage complex H protein] + glycine + H(+) = N(6)-[(R)-S(8)-aminomethyldihydrolipoyl]-L-lysyl-[glycine-cleavage complex H protein] + CO2. Functionally, the glycine cleavage system catalyzes the degradation of glycine. The P protein binds the alpha-amino group of glycine through its pyridoxal phosphate cofactor; CO(2) is released and the remaining methylamine moiety is then transferred to the lipoamide cofactor of the H protein. The sequence is that of Probable glycine dehydrogenase (decarboxylating) subunit 2 from Endomicrobium trichonymphae.